A 101-amino-acid chain; its full sequence is Urease subunit beta (101 aa).

The protein belongs to the urease beta subunit family. Heterotrimer of UreA (gamma), UreB (beta) and UreC (alpha) subunits. Three heterotrimers associate to form the active enzyme.

The protein resides in the cytoplasm. The enzyme catalyses urea + 2 H2O + H(+) = hydrogencarbonate + 2 NH4(+). It participates in nitrogen metabolism; urea degradation; CO(2) and NH(3) from urea (urease route): step 1/1. In Burkholderia orbicola (strain MC0-3), this protein is Urease subunit beta.